A 311-amino-acid chain; its full sequence is Aspartate carbamoyltransferase catalytic subunit (311 aa).

Arg55 and Thr56 together coordinate carbamoyl phosphate. Lys85 provides a ligand contact to L-aspartate. Carbamoyl phosphate contacts are provided by Arg106, His135, and Gln138. Arg168 and Arg230 together coordinate L-aspartate. Residues Leu268 and Pro269 each coordinate carbamoyl phosphate.

It belongs to the aspartate/ornithine carbamoyltransferase superfamily. ATCase family. As to quaternary structure, heterododecamer (2C3:3R2) of six catalytic PyrB chains organized as two trimers (C3), and six regulatory PyrI chains organized as three dimers (R2).

It catalyses the reaction carbamoyl phosphate + L-aspartate = N-carbamoyl-L-aspartate + phosphate + H(+). Its pathway is pyrimidine metabolism; UMP biosynthesis via de novo pathway; (S)-dihydroorotate from bicarbonate: step 2/3. Functionally, catalyzes the condensation of carbamoyl phosphate and aspartate to form carbamoyl aspartate and inorganic phosphate, the committed step in the de novo pyrimidine nucleotide biosynthesis pathway. The protein is Aspartate carbamoyltransferase catalytic subunit of Escherichia fergusonii (strain ATCC 35469 / DSM 13698 / CCUG 18766 / IAM 14443 / JCM 21226 / LMG 7866 / NBRC 102419 / NCTC 12128 / CDC 0568-73).